Here is a 397-residue protein sequence, read N- to C-terminus: Elongation factor Tu (397 aa).

Positions 10–207 (KPHCNIGTIG…AVDEYIPQPE (198 aa)) constitute a tr-type G domain. Residues 19-26 (GHVDHGKT) are G1. GTP is bound at residue 19–26 (GHVDHGKT). Residue Thr-26 coordinates Mg(2+). The segment at 61-65 (GITIS) is G2. The tract at residues 82–85 (DCPG) is G3. GTP is bound by residues 82–86 (DCPGH) and 137–140 (NKVD). Residues 137 to 140 (NKVD) form a G4 region. The G5 stretch occupies residues 175–177 (SAL).

Belongs to the TRAFAC class translation factor GTPase superfamily. Classic translation factor GTPase family. EF-Tu/EF-1A subfamily. In terms of assembly, monomer.

It localises to the cytoplasm. The enzyme catalyses GTP + H2O = GDP + phosphate + H(+). Functionally, GTP hydrolase that promotes the GTP-dependent binding of aminoacyl-tRNA to the A-site of ribosomes during protein biosynthesis. This is Elongation factor Tu from Zymomonas mobilis subsp. mobilis (strain ATCC 31821 / ZM4 / CP4).